Here is a 341-residue protein sequence, read N- to C-terminus: S-adenosylmethionine:tRNA ribosyltransferase-isomerase (341 aa).

The protein belongs to the QueA family. Monomer.

It localises to the cytoplasm. The catalysed reaction is 7-aminomethyl-7-carbaguanosine(34) in tRNA + S-adenosyl-L-methionine = epoxyqueuosine(34) in tRNA + adenine + L-methionine + 2 H(+). Its pathway is tRNA modification; tRNA-queuosine biosynthesis. Functionally, transfers and isomerizes the ribose moiety from AdoMet to the 7-aminomethyl group of 7-deazaguanine (preQ1-tRNA) to give epoxyqueuosine (oQ-tRNA). The polypeptide is S-adenosylmethionine:tRNA ribosyltransferase-isomerase (Chlorobium phaeovibrioides (strain DSM 265 / 1930) (Prosthecochloris vibrioformis (strain DSM 265))).